Consider the following 241-residue polypeptide: Ribosome-inactivating protein luffaculin 1 (241 aa).

N-linked (GlcNAc...) asparagine glycosylation is found at N28, N33, N77, and N84. E159 is a catalytic residue. N205 is a glycosylation site (N-linked (GlcNAc...) asparagine).

This sequence belongs to the ribosome-inactivating protein family. Type 1 RIP subfamily.

It carries out the reaction Endohydrolysis of the N-glycosidic bond at one specific adenosine on the 28S rRNA.. The protein is Ribosome-inactivating protein luffaculin 1 of Luffa acutangula (Ridged gourd).